A 249-amino-acid polypeptide reads, in one-letter code: 23S rRNA (guanosine-2'-O-)-methyltransferase RlmB (249 aa).

S-adenosyl-L-methionine is bound by residues glycine 200, isoleucine 220, and leucine 229.

This sequence belongs to the class IV-like SAM-binding methyltransferase superfamily. RNA methyltransferase TrmH family. RlmB subfamily.

Its subcellular location is the cytoplasm. The catalysed reaction is guanosine(2251) in 23S rRNA + S-adenosyl-L-methionine = 2'-O-methylguanosine(2251) in 23S rRNA + S-adenosyl-L-homocysteine + H(+). Its function is as follows. Specifically methylates the ribose of guanosine 2251 in 23S rRNA. This chain is 23S rRNA (guanosine-2'-O-)-methyltransferase RlmB, found in Xanthomonas campestris pv. campestris (strain ATCC 33913 / DSM 3586 / NCPPB 528 / LMG 568 / P 25).